The chain runs to 695 residues: Phenoloxidase subunit 2 (695 aa).

Cu cation contacts are provided by His215, His219, and His245. Residue Glu353 is the Proton acceptor of the active site. Cu cation is bound by residues His368, His372, and His408. Intrachain disulfides connect Cys586-Cys630 and Cys588-Cys637.

Heterodimer. Forms a complex with an interleukin 1-like protein as a consequence of a host defense response. Requires Cu(2+) as cofactor. Post-translationally, the N-terminus is blocked. Synthesized by oenocytoids, a type of hemocyte, and released into the hemolymph plasma.

It is found in the secreted. It catalyses the reaction 2 L-dopa + O2 = 2 L-dopaquinone + 2 H2O. It carries out the reaction L-tyrosine + O2 = L-dopaquinone + H2O. Activated by immulectin and lipopolysaccharide. This is a copper-containing oxidase that functions in the formation of pigments such as melanins and other polyphenolic compounds. Catalyzes the rate-limiting conversions of tyrosine to DOPA, DOPA to DOPA-quinone and possibly 5,6 dihydroxyindole to indole-5'6 quinone. Binds to the surface of hemocytes and is involved in hemocyte melanization. This chain is Phenoloxidase subunit 2, found in Manduca sexta (Tobacco hawkmoth).